The primary structure comprises 878 residues: DNA mismatch repair protein MutS (878 aa).

An ATP-binding site is contributed by glycine 629–serine 636.

Belongs to the DNA mismatch repair MutS family.

Its function is as follows. This protein is involved in the repair of mismatches in DNA. It is possible that it carries out the mismatch recognition step. This protein has a weak ATPase activity. The polypeptide is DNA mismatch repair protein MutS (Roseobacter denitrificans (strain ATCC 33942 / OCh 114) (Erythrobacter sp. (strain OCh 114))).